Here is a 310-residue protein sequence, read N- to C-terminus: tRNA dimethylallyltransferase (310 aa).

10–17 contributes to the ATP binding site; it reads GPTAVGKS. 12–17 contributes to the substrate binding site; it reads TAVGKS. Interaction with substrate tRNA stretches follow at residues 35–38, 159–163, and 274–281; these read DSAQ, QRIQR, and KRQITWLR.

The protein belongs to the IPP transferase family. Monomer. Requires Mg(2+) as cofactor.

It carries out the reaction adenosine(37) in tRNA + dimethylallyl diphosphate = N(6)-dimethylallyladenosine(37) in tRNA + diphosphate. In terms of biological role, catalyzes the transfer of a dimethylallyl group onto the adenine at position 37 in tRNAs that read codons beginning with uridine, leading to the formation of N6-(dimethylallyl)adenosine (i(6)A). The sequence is that of tRNA dimethylallyltransferase from Halorhodospira halophila (strain DSM 244 / SL1) (Ectothiorhodospira halophila (strain DSM 244 / SL1)).